Consider the following 367-residue polypeptide: Peptide chain release factor 1 (367 aa).

Residue glutamine 243 is modified to N5-methylglutamine.

Belongs to the prokaryotic/mitochondrial release factor family. In terms of processing, methylated by PrmC. Methylation increases the termination efficiency of RF1.

The protein localises to the cytoplasm. Its function is as follows. Peptide chain release factor 1 directs the termination of translation in response to the peptide chain termination codons UAG and UAA. The chain is Peptide chain release factor 1 from Acidovorax sp. (strain JS42).